We begin with the raw amino-acid sequence, 303 residues long: Elongation factor Ts (303 aa).

The segment at 79–82 (TDFV) is involved in Mg(2+) ion dislocation from EF-Tu.

This sequence belongs to the EF-Ts family.

The protein localises to the cytoplasm. In terms of biological role, associates with the EF-Tu.GDP complex and induces the exchange of GDP to GTP. It remains bound to the aminoacyl-tRNA.EF-Tu.GTP complex up to the GTP hydrolysis stage on the ribosome. The protein is Elongation factor Ts of Syntrophotalea carbinolica (strain DSM 2380 / NBRC 103641 / GraBd1) (Pelobacter carbinolicus).